Consider the following 471-residue polypeptide: MAPHVLVVPFPGQGHMNPMVQFAKRLASKGVATTLVTTRFIQRTADVDAHPAMVEAISDGHDEGGFASAAGVAEYLEKQAAAASASLASLVEARASSADAFTCVVYDSYEDWVLPVARRMGLPAVPFSTQSCAVSAVYYHFSQGRLAVPPGAAADGSDGGAGAAALSEAFLGLPEMERSELPSFVFDHGPYPTIAMQAIKQFAHAGKDDWVLFNSFEELETEVLAGLTKYLKARAIGPCVPLPTAGRTAGANGRITYGANLVKPEDACTKWLDTKPDRSVAYVSFGSLASLGNAQKEELARGLLAAGKPFLWVVRASDEHQVPRYLLAEATATGAAMVVPWCPQLDVLAHPAVGCFVTHCGWNSTLEALSFGVPMVAMALWTDQPTNARNVELAWGAGVRARRDAGAGVFLRGEVERCVRAVMDGGEAASAARKAAGEWRDRARAAVAPGGSSDRNLDEFVQFVRAGATEK.

The active-site Proton acceptor is histidine 15. Histidine 15 is a binding site for an anthocyanidin. Aspartate 107 serves as the catalytic Charge relay. 9 residues coordinate UDP-alpha-D-glucose: threonine 129, glutamine 344, histidine 359, tryptophan 362, asparagine 363, serine 364, glutamate 367, aspartate 383, and glutamine 384.

It belongs to the UDP-glycosyltransferase family.

It catalyses the reaction (indol-3-yl)acetate + UDP-alpha-D-glucose = 1-O-(indol-3-ylacetyl)-beta-D-glucose + UDP. It functions in the pathway plant hormone metabolism; auxin conjugation. This Zea mays (Maize) protein is Indole-3-acetate beta-glucosyltransferase (IAGLU).